Reading from the N-terminus, the 324-residue chain is MDTLTRFLPEHLQQNQLPEALGGVLLSVVSACTEINAKVRLGALAGVLGMAGTGNIQGEDQKKLDVIANNIMIDTLKANPAVAGLASEEEDTFVSAGENGRYLVLFDPLDGSSNIDVNISVGTIFSILAKPEGALATESFLQTGRQQLAAGYVLYGPQTQLVFTFGHGVYVFTLNAENEFVLTKENPKVPESTKEFAINMSNRRHWLPPVQQYVDELLAGETGTRGKNYNMRWVASMVAEIHRILMRGGVFMYLQDKRDPSKPGKLRLMYEANPMALILEQAGASASNAYQAMLDIQPESLHQRVAVIMGSSEEVDYLNRLHSK.

Mg(2+)-binding residues include Glu-88, Asp-107, Leu-109, and Asp-110. Substrate contacts are provided by residues 110-113 (DGSS), Asn-199, and Lys-265. Mg(2+) is bound at residue Glu-271.

Belongs to the FBPase class 1 family. As to quaternary structure, homotetramer. The cofactor is Mg(2+).

It is found in the cytoplasm. It carries out the reaction beta-D-fructose 1,6-bisphosphate + H2O = beta-D-fructose 6-phosphate + phosphate. It participates in carbohydrate biosynthesis; gluconeogenesis. The chain is Fructose-1,6-bisphosphatase class 1 from Neisseria gonorrhoeae (strain ATCC 700825 / FA 1090).